The primary structure comprises 250 residues: Expansin-like B1 (250 aa).

The first 24 residues, 1 to 24 (MKHSHVLLLLFVQVIVLLPLLCLS), serve as a signal peptide directing secretion. The region spanning 45-149 (RGHCGYGEFG…QRIPCRYAGY (105 aa)) is the Expansin-like EG45 domain. Asn-72 is a glycosylation site (N-linked (GlcNAc...) asparagine). The 83-residue stretch at 163 to 245 (HYLAILVLYV…DWTAGATYDS (83 aa)) folds into the Expansin-like CBD domain.

Belongs to the expansin family. Expansin-like B subfamily.

The protein localises to the secreted. The polypeptide is Expansin-like B1 (EXLB1) (Arabidopsis thaliana (Mouse-ear cress)).